We begin with the raw amino-acid sequence, 148 residues long: Large ribosomal subunit protein uL15 (148 aa).

Residues 1-30 (MPSRLRKTRKLRGHVSHGHGRIGKHRKHPG) are compositionally biased toward basic residues. The tract at residues 1-38 (MPSRLRKTRKLRGHVSHGHGRIGKHRKHPGGRGNAGGL) is disordered. (3S)-3-hydroxyhistidine is present on His-39. N6-acetyllysine occurs at positions 47 and 55. Ser-68 carries the phosphoserine modification. N6-acetyllysine is present on Lys-110.

The protein belongs to the universal ribosomal protein uL15 family. Post-translationally, hydroxylated on His-39 by MINA.

This chain is Large ribosomal subunit protein uL15 (RPL27A), found in Pan troglodytes (Chimpanzee).